Here is a 337-residue protein sequence, read N- to C-terminus: Protein RecA (337 aa).

An ATP-binding site is contributed by 66–73 (GPESSGKT).

The protein belongs to the RecA family.

It is found in the cytoplasm. Can catalyze the hydrolysis of ATP in the presence of single-stranded DNA, the ATP-dependent uptake of single-stranded DNA by duplex DNA, and the ATP-dependent hybridization of homologous single-stranded DNAs. It interacts with LexA causing its activation and leading to its autocatalytic cleavage. In Mesomycoplasma hyopneumoniae (strain 232) (Mycoplasma hyopneumoniae), this protein is Protein RecA.